A 48-amino-acid chain; its full sequence is uncharacterized protein (48 aa).

This is an uncharacterized protein from Methanocaldococcus jannaschii (strain ATCC 43067 / DSM 2661 / JAL-1 / JCM 10045 / NBRC 100440) (Methanococcus jannaschii).